Here is a 681-residue protein sequence, read N- to C-terminus: MGSPMHRVSLGDHWSWQVHPDIDSERHSPSFSVERLTNILDGGLPNTVLRRKVESIIQSDPVFNLKKLYFMTREELYEDAIQKRFHLEKLAWSLGWSEDGPERIYANRVLDGNVNLSLHGVAMNAIRSLGSDEQIAKWGQLCKNFQIITTYAQTELGHGTYLQGLETEATYDEARQELVIHSPTMTSTKWWPGDLGWSVTHAVVLAQLTCLGVRHGMHAFIVPIRSLEDHTPLPGITVGDIGPKMGLEHIDNGFLQLNHVRVPRENMLSRFAEVLPDGTYQRLGTPQSNYLGMLVTRVQLLCKGILPSLQKACIIATRYSVIRHQSRLRPSDPEAKILEYQTQQQKLLPQLAVSYAFHFTATSLSEFFHSSYSAILKRDFSLLPELHALSTGMKATFADFCAQGAEICRRACGGHGYSKLSGLPTLVARATASCTYEGENTVLYLQVARFLMKSYLQAQASPGATPQKPLPQSVMYIATQRPARCSAQTAADFRCPDVYTTAWAYVSTRLIRDAAHRTQTLMKSGVDQHDAWNQTTVIHLQAAKAHCYFITVKNFKEAVEKLDKEPEIQRVLQRLCDLYALHGVLTNSGDFLHDGFLSGAQVDMAREAFLDLLPLIRKDAILLTDAFDFSDHCLNSALGCYDGHVYERLFEWAQKYPANTQENPAYKKYIRPLMLGWRHKM.

Ser3 and Ser9 each carry phosphoserine. 6 positions are modified to N6-succinyllysine: Lys66, Lys137, Lys303, Lys453, Lys561, and Lys667. The short motif at 679–681 is the Microbody targeting signal element; it reads HKM.

Belongs to the acyl-CoA oxidase family. As to quaternary structure, homodimer. Requires FAD as cofactor. As to expression, most abundant in liver. Also expressed in kidney. Not present in any other tissues tested.

The protein localises to the peroxisome. The catalysed reaction is (25R)-3alpha,7alpha,12alpha-trihydroxy-5beta-cholestan-26-oyl-CoA + A + H2O = (24R,25R)-3alpha,7alpha,12alpha,24-tetrahydroxy-5beta-cholestan-26-oyl-CoA + AH2. It carries out the reaction (25S)-3alpha,7alpha,12alpha-trihydroxy-5beta-cholestan-26-oyl-CoA + O2 = (24E)-3alpha,7alpha,12alpha-trihydroxy-5beta-cholest-24-en-26-oyl-CoA + H2O2. Its function is as follows. Oxidizes the CoA esters of the bile acid intermediates di- and tri-hydroxycoprostanic acids. Capable of oxidizing short as well as long chain 2-methyl branched fatty acids. In Rattus norvegicus (Rat), this protein is Peroxisomal acyl-coenzyme A oxidase 2.